Consider the following 388-residue polypeptide: Chorismate synthase (388 aa).

R39 and R45 together coordinate NADP(+). Residues 130 to 132 (RSS), 251 to 252 (NA), G296, 311 to 315 (KPIPT), and R337 each bind FMN.

Belongs to the chorismate synthase family. Homotetramer. The cofactor is FMNH2.

It catalyses the reaction 5-O-(1-carboxyvinyl)-3-phosphoshikimate = chorismate + phosphate. It participates in metabolic intermediate biosynthesis; chorismate biosynthesis; chorismate from D-erythrose 4-phosphate and phosphoenolpyruvate: step 7/7. Functionally, catalyzes the anti-1,4-elimination of the C-3 phosphate and the C-6 proR hydrogen from 5-enolpyruvylshikimate-3-phosphate (EPSP) to yield chorismate, which is the branch point compound that serves as the starting substrate for the three terminal pathways of aromatic amino acid biosynthesis. This reaction introduces a second double bond into the aromatic ring system. The sequence is that of Chorismate synthase from Streptococcus agalactiae serotype III (strain NEM316).